Consider the following 1537-residue polypeptide: Histone-lysine N-methyltransferase, H3 lysine-79 specific (1537 aa).

A DOT1 domain is found at 16–330; that stretch reads EPAVYPWPLP…ILENYFSSLK (315 aa). S-adenosyl-L-methionine-binding positions include 136-139, 159-168, E186, and 222-223; these read YGET, FVDLGSGVGQ, and DF. Residue S297 is modified to Phosphoserine. A compositionally biased stretch (basic and acidic residues) spans 334-350; it reads LREEQEAARRRQQRESK. A disordered region spans residues 334-467; that stretch reads LREEQEAARR…SPFYQLPPSV (134 aa). A Phosphoserine modification is found at S374. The required for interaction with nucleosomes and DNA stretch occupies residues 391 to 416; sequence PSKARKKKLNKKGRKMAGRKRGRPKK. Basic residues predominate over residues 393-416; it reads KARKKKLNKKGRKMAGRKRGRPKK. Polar residues predominate over residues 439 to 450; the sequence is QTVSQTAASSPQ. Phosphoserine is present on residues S448 and S471. T480 is subject to Phosphothreonine. S775 and S786 each carry phosphoserine. 4 disordered regions span residues 785–853, 893–912, 957–1128, and 1145–1243; these read LSQD…LRER, RAER…DPSS, TPGA…LNLN, and SPET…KWKS. Basic and acidic residues predominate over residues 800 to 809; that stretch reads LHSRAEHTKE. At S826 the chain carries Phosphoserine. S834 bears the Phosphoserine; by MAPK11 mark. Basic and acidic residues predominate over residues 844–853; that stretch reads KSSEKGLRER. 3 stretches are compositionally biased toward polar residues: residues 899 to 912, 966 to 986, and 994 to 1010; these read STPS…DPSS, DESS…STPQ, and PRNS…SSSP. T900 carries the phosphothreonine; by MAPK11 modification. S902 is subject to Phosphoserine; by MAPK11. T984 is modified (phosphothreonine; by MAPK11). At S997 the chain carries Phosphoserine. 2 positions are modified to phosphoserine; by MAPK11: S1001 and S1009. Residue S1035 is modified to Phosphoserine. Residues 1048 to 1068 are compositionally biased toward polar residues; that stretch reads TITTGAGSAKQSPSSKHSPLT. Position 1093 is a phosphoserine (S1093). Phosphoserine; by MAPK11 is present on S1104. A compositionally biased stretch (polar residues) spans 1118-1128; the sequence is TQPSGSPLNLN. Positions 1158-1171 are enriched in basic and acidic residues; sequence QDHDQPPVLKKERP. The segment covering 1172 to 1184 has biased composition (polar residues); that stretch reads LSQTNGAHYSPLT. Acidic residues predominate over residues 1185–1195; that stretch reads SDEEPGSEDEP. Residues S1213 and S1246 each carry the phosphoserine modification. The tract at residues 1334–1410 is disordered; sequence GASLPHKGPE…DKTPLLSGKA (77 aa).

The protein belongs to the class I-like SAM-binding methyltransferase superfamily. DOT1 family. Interacts with MLLT10.

The protein localises to the nucleus. The catalysed reaction is L-lysyl(79)-[histone H3] + 3 S-adenosyl-L-methionine = N(6),N(6),N(6)-trimethyl-L-lysyl(79)-[histone H3] + 3 S-adenosyl-L-homocysteine + 3 H(+). In terms of biological role, histone methyltransferase. Methylates 'Lys-79' of histone H3. Nucleosomes are preferred as substrate compared to free histones. Binds to DNA. The chain is Histone-lysine N-methyltransferase, H3 lysine-79 specific from Homo sapiens (Human).